A 493-amino-acid chain; its full sequence is Cytochrome P450 2E1 (493 aa).

Residue phenylalanine 298 to threonine 303 coordinates substrate. A heme-binding site is contributed by cysteine 437.

It belongs to the cytochrome P450 family. As to quaternary structure, interacts with chaperones HSP70 and HSP90; this interaction is required for initial targeting to mitochondria. The cofactor is heme.

The protein resides in the endoplasmic reticulum membrane. It is found in the microsome membrane. The protein localises to the mitochondrion inner membrane. The enzyme catalyses an organic molecule + reduced [NADPH--hemoprotein reductase] + O2 = an alcohol + oxidized [NADPH--hemoprotein reductase] + H2O + H(+). It catalyses the reaction (5Z,8Z,11Z)-eicosatrienoate + reduced [NADPH--hemoprotein reductase] + O2 = 19-hydroxy-(5Z,8Z,11Z)-eicosatrienoate + oxidized [NADPH--hemoprotein reductase] + H2O + H(+). It carries out the reaction (5Z,8Z,11Z,14Z,17Z)-eicosapentaenoate + reduced [NADPH--hemoprotein reductase] + O2 = 19-hydroxy-(5Z,8Z,11Z,14Z,17Z)-eicosapentaenoate + oxidized [NADPH--hemoprotein reductase] + H2O + H(+). The catalysed reaction is (4Z,7Z,10Z,13Z,16Z,19Z)-docosahexaenoate + reduced [NADPH--hemoprotein reductase] + O2 = 21-hydroxy-(4Z,7Z,10Z,13Z,16Z,19Z)-docosahexaenoate + oxidized [NADPH--hemoprotein reductase] + H2O + H(+). The enzyme catalyses dodecanoate + reduced [NADPH--hemoprotein reductase] + O2 = 11-hydroxydodecanoate + oxidized [NADPH--hemoprotein reductase] + H2O + H(+). It catalyses the reaction tetradecanoate + reduced [NADPH--hemoprotein reductase] + O2 = 13-hydroxytetradecanoate + oxidized [NADPH--hemoprotein reductase] + H2O + H(+). It carries out the reaction 4-nitrophenol + NADPH + O2 + H(+) = 4-nitrocatechol + NADP(+) + H2O. It functions in the pathway lipid metabolism; fatty acid metabolism. With respect to regulation, the omega-1 hydroxylase activity is stimulated by cytochrome b5. A cytochrome P450 monooxygenase involved in the metabolism of fatty acids. Mechanistically, uses molecular oxygen inserting one oxygen atom into a substrate, and reducing the second into a water molecule, with two electrons provided by NADPH via cytochrome P450 reductase (NADPH--hemoprotein reductase). Catalyzes the hydroxylation of carbon-hydrogen bonds. Hydroxylates fatty acids specifically at the omega-1 position displaying the highest catalytic activity for saturated fatty acids. May be involved in the oxidative metabolism of xenobiotics. This Mesocricetus auratus (Golden hamster) protein is Cytochrome P450 2E1 (CYP2E1).